Consider the following 206-residue polypeptide: Ras-related protein Rab-18 (206 aa).

M1 is modified (N-acetylmethionine). Positions 17, 20, 21, 22, 23, 34, 35, 40, 66, 123, and 125 each coordinate GTP. S22 lines the Mg(2+) pocket. 2 short sequence motifs (switch) span residues D31–F45 and D63–G80. Residue T40 participates in Mg(2+) binding. S144 bears the Phosphoserine mark. A152 lines the GTP pocket. C199 carries S-palmitoyl cysteine lipidation. C203 bears the Cysteine methyl ester mark. C203 is lipidated: S-geranylgeranyl cysteine. A propeptide spans S204 to L206 (removed in mature form).

This sequence belongs to the small GTPase superfamily. Rab family. In terms of assembly, interacts (in GTP-bound form) with ZFYVE1. Interacts with ZW10 and this interaction is enhanced in the presence of ZFYVE1. Interacts with BSCL2. Mg(2+) serves as cofactor. Expression is high in the brain, moderate in the pituitary, and low in the liver. Detected in all tissues. Highly enriched on apical endocytic structures in polarized epithelial cells of kidney proximal tubules. Detected on both the apical and basolateral domains in epithelial cells of the intestine.

It localises to the endoplasmic reticulum membrane. It is found in the golgi apparatus. The protein localises to the cis-Golgi network membrane. The protein resides in the lipid droplet. Its subcellular location is the apical cell membrane. It catalyses the reaction GTP + H2O = GDP + phosphate + H(+). With respect to regulation, regulated by guanine nucleotide exchange factor (GEF) RAB3GAP1-RAB3GAP2 complex at the cis-Golgi membrane which promotes the exchange of bound GDP for free GTP. Regulated by GTPase activating protein (GAP) TBC1D20 at the ER membrane which increases the GTP hydrolysis activity. Inhibited by GDP dissociation inhibitors (GDIs) which prevent Rab-GDP dissociation. Functionally, the small GTPases Rab are key regulators of intracellular membrane trafficking, from the formation of transport vesicles to their fusion with membranes. Rabs cycle between an inactive GDP-bound form and an active GTP-bound form that is able to recruit to membranes different sets of downstream effectors directly responsible for vesicle formation, movement, tethering and fusion. RAB18 is required for the localization of ZFYVE1 to lipid droplets and for its function in mediating the formation of endoplasmic reticulum-lipid droplets (ER-LD) contacts. Also required for maintaining endoplasmic reticulum structure. Plays a role in apical endocytosis/recycling. Plays a key role in eye and brain development and neurodegeneration. This chain is Ras-related protein Rab-18, found in Mus musculus (Mouse).